A 154-amino-acid chain; its full sequence is Transcriptional repressor NrdR (154 aa).

The segment at 3–34 (CPFCGANDTKVIDSRLVAEGEQVRRRRECVAC) is a zinc-finger region. In terms of domain architecture, ATP-cone spans 49-139 (PRLIKQDGTR…VYRRFQDLDE (91 aa)).

It belongs to the NrdR family. Zn(2+) is required as a cofactor.

Negatively regulates transcription of bacterial ribonucleotide reductase nrd genes and operons by binding to NrdR-boxes. This chain is Transcriptional repressor NrdR, found in Pseudomonas putida (strain GB-1).